The primary structure comprises 439 residues: 23S rRNA (uracil(1939)-C(5))-methyltransferase RlmD (439 aa).

The TRAM domain maps to 10–68; sequence QKKLRAAFTTIVQDLDYQGLGVAKIQGKTWFIENALPQEQVQVQVIEEKRQYGLGRVQK. Positions 81, 87, 90, and 168 each coordinate [4Fe-4S] cluster. Residues Gln-271, Phe-300, Asn-305, Glu-321, Asp-348, and Asp-369 each contribute to the S-adenosyl-L-methionine site. The Nucleophile role is filled by Cys-395.

Belongs to the class I-like SAM-binding methyltransferase superfamily. RNA M5U methyltransferase family. RlmD subfamily.

It catalyses the reaction uridine(1939) in 23S rRNA + S-adenosyl-L-methionine = 5-methyluridine(1939) in 23S rRNA + S-adenosyl-L-homocysteine + H(+). In terms of biological role, catalyzes the formation of 5-methyl-uridine at position 1939 (m5U1939) in 23S rRNA. The polypeptide is 23S rRNA (uracil(1939)-C(5))-methyltransferase RlmD (Histophilus somni (strain 129Pt) (Haemophilus somnus)).